The following is a 331-amino-acid chain: DNA-directed RNA polymerase subunit alpha (331 aa).

The interval 1 to 233 (MVREKVTVST…DLFIPFLHAE (233 aa)) is alpha N-terminal domain (alpha-NTD). The segment at 265 to 331 (KEIELKYIFI…GILEKHFTID (67 aa)) is alpha C-terminal domain (alpha-CTD).

This sequence belongs to the RNA polymerase alpha chain family. As to quaternary structure, in plastids the minimal PEP RNA polymerase catalytic core is composed of four subunits: alpha, beta, beta', and beta''. When a (nuclear-encoded) sigma factor is associated with the core the holoenzyme is formed, which can initiate transcription.

It is found in the plastid. The protein localises to the chloroplast. The catalysed reaction is RNA(n) + a ribonucleoside 5'-triphosphate = RNA(n+1) + diphosphate. Functionally, DNA-dependent RNA polymerase catalyzes the transcription of DNA into RNA using the four ribonucleoside triphosphates as substrates. In Vitis vinifera (Grape), this protein is DNA-directed RNA polymerase subunit alpha.